The sequence spans 206 residues: Large ribosomal subunit protein uL4 (206 aa).

The protein belongs to the universal ribosomal protein uL4 family. Part of the 50S ribosomal subunit.

Functionally, one of the primary rRNA binding proteins, this protein initially binds near the 5'-end of the 23S rRNA. It is important during the early stages of 50S assembly. It makes multiple contacts with different domains of the 23S rRNA in the assembled 50S subunit and ribosome. Forms part of the polypeptide exit tunnel. This is Large ribosomal subunit protein uL4 from Xanthobacter autotrophicus (strain ATCC BAA-1158 / Py2).